The following is a 546-amino-acid chain: Chaperonin GroEL 1 (546 aa).

ATP is bound by residues 30-33 (TLGP), K51, 87-91 (DGTTT), G415, 479-481 (NAA), and D495.

The protein belongs to the chaperonin (HSP60) family. In terms of assembly, forms a cylinder of 14 subunits composed of two heptameric rings stacked back-to-back. Interacts with the co-chaperonin GroES.

The protein resides in the cytoplasm. The catalysed reaction is ATP + H2O + a folded polypeptide = ADP + phosphate + an unfolded polypeptide.. Together with its co-chaperonin GroES, plays an essential role in assisting protein folding. The GroEL-GroES system forms a nano-cage that allows encapsulation of the non-native substrate proteins and provides a physical environment optimized to promote and accelerate protein folding. The polypeptide is Chaperonin GroEL 1 (Vibrio vulnificus (strain CMCP6)).